We begin with the raw amino-acid sequence, 59 residues long: VAFATSFTVCWTPYYVLGIWYWFDPEMLNRVSDPVNHFFFLFAFLNPCFDPLIYGYFSL.

The Cytoplasmic segment spans residues 1–2 (VA). The chain crosses the membrane as a helical span at residues 3-23 (FATSFTVCWTPYYVLGIWYWF). The Extracellular portion of the chain corresponds to 24–37 (DPEMLNRVSDPVNH). A helical membrane pass occupies residues 38-58 (FFFLFAFLNPCFDPLIYGYFS). A topological domain (cytoplasmic) is located at residue Leu-59.

This sequence belongs to the G-protein coupled receptor 1 family.

The protein resides in the cell membrane. Receptor for gonadotropin releasing hormone (GnRH) that mediates the action of GnRH to stimulate the secretion of the gonadotropic hormones luteinizing hormone (LH) and follicle-stimulating hormone (FSH). This receptor mediates its action by association with G-proteins that activate a phosphatidylinositol-calcium second messenger system. The polypeptide is Gonadotropin-releasing hormone receptor (GNRHR) (Macaca mulatta (Rhesus macaque)).